A 670-amino-acid chain; its full sequence is NADH-ubiquinone oxidoreductase chain 5 (670 aa).

Transmembrane regions (helical) follow at residues 1-21 (MYIV…IFGH), 31-51 (IAVG…YEIL), 81-101 (LTSI…LYSM), 111-131 (TRFF…VTAD), 133-153 (FVQL…LINF), 178-198 (LFFG…SVIF), 211-231 (LLGY…IGVV), 251-271 (TPVS…FLVL), 283-303 (ILNI…TIGI), 311-331 (VIAY…GLLN), 339-359 (LTTH…VIHG), 375-395 (LMPL…GFPF), 421-441 (AIIG…LLIL), 462-482 (TNMV…GYVT), 519-539 (LLPL…YFNI), 566-586 (FDFL…YDVM), 594-614 (LWEK…FTAL), 629-649 (IVQT…TGFI), and 650-670 (YMEL…IKID).

The protein belongs to the complex I subunit 5 family.

Its subcellular location is the mitochondrion inner membrane. The catalysed reaction is a ubiquinone + NADH + 5 H(+)(in) = a ubiquinol + NAD(+) + 4 H(+)(out). In terms of biological role, core subunit of the mitochondrial membrane respiratory chain NADH dehydrogenase (Complex I) that is believed to belong to the minimal assembly required for catalysis. Complex I functions in the transfer of electrons from NADH to the respiratory chain. The immediate electron acceptor for the enzyme is believed to be ubiquinone. This chain is NADH-ubiquinone oxidoreductase chain 5 (nad5), found in Dictyostelium discoideum (Social amoeba).